The sequence spans 422 residues: Gamma-glutamyl phosphate reductase (422 aa).

The protein belongs to the gamma-glutamyl phosphate reductase family.

Its subcellular location is the cytoplasm. It catalyses the reaction L-glutamate 5-semialdehyde + phosphate + NADP(+) = L-glutamyl 5-phosphate + NADPH + H(+). It participates in amino-acid biosynthesis; L-proline biosynthesis; L-glutamate 5-semialdehyde from L-glutamate: step 2/2. In terms of biological role, catalyzes the NADPH-dependent reduction of L-glutamate 5-phosphate into L-glutamate 5-semialdehyde and phosphate. The product spontaneously undergoes cyclization to form 1-pyrroline-5-carboxylate. This is Gamma-glutamyl phosphate reductase from Nitrosomonas eutropha (strain DSM 101675 / C91 / Nm57).